The primary structure comprises 156 residues: Large ribosomal subunit protein uL15 (156 aa).

The tract at residues 1 to 48 (MKLHDLKPTPGSRKDRKRVGRGPGGTDKTAGRGHKGQKSRSGAGKGAF) is disordered.

The protein belongs to the universal ribosomal protein uL15 family. In terms of assembly, part of the 50S ribosomal subunit. Contacts proteins L4, L21 and L35.

Binds to the 23S rRNA. The sequence is that of Large ribosomal subunit protein uL15 (rplO) from Deinococcus radiodurans (strain ATCC 13939 / DSM 20539 / JCM 16871 / CCUG 27074 / LMG 4051 / NBRC 15346 / NCIMB 9279 / VKM B-1422 / R1).